Consider the following 107-residue polypeptide: Ferredoxin Fdx8 (107 aa).

4Fe-4S ferredoxin-type domains lie at 1–31 (MAYVIAEPCVATCDTACVPVCPVDCIHGPLA) and 50–79 (LQLYIDPESCICCGACENECPVGAIFDEDE). 8 residues coordinate [4Fe-4S] cluster: cysteine 9, cysteine 13, cysteine 17, cysteine 21, cysteine 59, cysteine 62, cysteine 65, and cysteine 69.

Requires [4Fe-4S] cluster as cofactor.

In terms of biological role, ferredoxins are iron-sulfur proteins that transfer electrons in a wide variety of metabolic reactions. Fdx2 can receive electrons from both FdR_A and FdR_B ferredoxin reductases, with a preference for FdR_B compared with FdR_A, and transfer the electrons to the cytochrome P450 CYP260A1. The protein is Ferredoxin Fdx8 of Sorangium cellulosum (strain So ce56) (Polyangium cellulosum (strain So ce56)).